Reading from the N-terminus, the 440-residue chain is tRNA (guanine(37)-N(1))-methyltransferase (440 aa).

S-adenosyl-L-methionine is bound by residues histidine 217, 255–256 (DL), 283–284 (DG), and asparagine 315.

Belongs to the class I-like SAM-binding methyltransferase superfamily. TRM5/TYW2 family. Monomer.

It is found in the mitochondrion matrix. Its subcellular location is the nucleus. The protein resides in the cytoplasm. It catalyses the reaction guanosine(37) in tRNA + S-adenosyl-L-methionine = N(1)-methylguanosine(37) in tRNA + S-adenosyl-L-homocysteine + H(+). Its function is as follows. Specifically methylates the N1 position of guanosine-37 in various cytoplasmic and mitochondrial tRNAs. Methylation is not dependent on the nature of the nucleoside 5' of the target nucleoside. This is the first step in the biosynthesis of wybutosine (yW), a modified base adjacent to the anticodon of tRNAs and required for accurate decoding. This is tRNA (guanine(37)-N(1))-methyltransferase from Drosophila pseudoobscura pseudoobscura (Fruit fly).